The primary structure comprises 468 residues: MTQKVRTRFAPSPTGFIHLGNIRSALYPWAFARATGGDFILRIEDTDVERSTQASVDVIIEGMAWLQLDHDEGPFYQMQRMDRYKEVLAGLQASGHVYPCYMSVEELDALRERQMANKEKPRYDGTWRPEEGKVLPPVPEGVRPVLRFKTPQGGVVAWEDKCKGRIEFQNSELDDLVIARPDGTPTYNFCVCVDDMDMAITHVIRGDDHVNNTPRQIHIFEALGASVPVFAHLPTVLNEQGEKMSKRNGAKAVTQYRDEGYLPDAMVNYLARLGWSHGDDEIFSRAQFLEWFNLDHLGRSAGQFDEAKLRWVNAQHLKALDDAALAELVRPFVLKTGLDQALLDADDRLPRICALFKDRCETLVDLAGWVRLFYVDAFDRNAEDLAKHVTDVVAPALDAFAEGIASVEWSKEAIAALIKEVLKAQGLKMPQLAMPVRVLTLGTAHTPSVDAVLELLGREKILARLKNR.

The short motif at 11-21 (PSPTGFIHLGN) is the 'HIGH' region element. The short motif at 243-247 (KMSKR) is the 'KMSKS' region element. Residue Lys246 participates in ATP binding.

This sequence belongs to the class-I aminoacyl-tRNA synthetase family. Glutamate--tRNA ligase type 1 subfamily. Monomer.

The protein resides in the cytoplasm. The catalysed reaction is tRNA(Glu) + L-glutamate + ATP = L-glutamyl-tRNA(Glu) + AMP + diphosphate. Its function is as follows. Catalyzes the attachment of glutamate to tRNA(Glu) in a two-step reaction: glutamate is first activated by ATP to form Glu-AMP and then transferred to the acceptor end of tRNA(Glu). This is Glutamate--tRNA ligase from Delftia acidovorans (strain DSM 14801 / SPH-1).